The chain runs to 746 residues: Lysine-specific histone demethylase 1 homolog 2 (746 aa).

The segment at 1-26 (MNSPASDETAPRRNRRKVSRKNYDEN) is disordered. In terms of domain architecture, SWIRM spans 51 to 152 (EKETETEALI…FGVSPLFAPY (102 aa)). FAD contacts are provided by Glu189, Arg191, Arg197, and Glu569.

It belongs to the flavin monoamine oxidase family. FAD is required as a cofactor. In terms of tissue distribution, expressed in the shoot and root apical regions of young seedlings. Expressed in inflorescences.

Its function is as follows. Probable histone demethylase that reduces the levels of histone H3 'Lys-4' methylation in chromatin of the floral repressor FLOWERING LOCUS C (FLC) and the sporophytically silenced floral repressor FWA. Seems to act in partial redundancy with FLOWERING LOCUS D (FLD) to repress FLC expression. Required for cytosine methylation of FWA. Controls primary seed dormancy by regulating DOG1 and abscisic acid signaling-related genes. The chain is Lysine-specific histone demethylase 1 homolog 2 from Arabidopsis thaliana (Mouse-ear cress).